A 249-amino-acid polypeptide reads, in one-letter code: 3-deoxy-D-manno-octulosonic acid kinase (249 aa).

Asp-175 is an active-site residue.

The protein belongs to the protein kinase superfamily. KdkA/RfaP family.

It is found in the cell inner membrane. It catalyses the reaction an alpha-Kdo-(2-&gt;6)-lipid IVA + ATP = a 4-O-phospho-alpha-Kdo-(2-&gt;6)-lipid IVA + ADP + H(+). It participates in bacterial outer membrane biogenesis; LPS core biosynthesis. Catalyzes the ATP-dependent phosphorylation of the 3-deoxy-D-manno-octulosonic acid (Kdo) residue in Kdo-lipid IV(A) at the 4-OH position. This chain is 3-deoxy-D-manno-octulosonic acid kinase, found in Stenotrophomonas maltophilia (strain R551-3).